Here is a 1233-residue protein sequence, read N- to C-terminus: Structural maintenance of chromosomes protein 1A (1233 aa).

32 to 39 lines the ATP pocket; sequence GPNGSGKS. Coiled coils occupy residues 104–124 and 163–503; these read EYKI…LEKL and ELAQ…KAEI. The segment covering 284 to 293 has biased composition (basic and acidic residues); that stretch reads IKEKDSELNQ. Disordered regions lie at residues 284–308 and 348–369; these read IKEK…TSHK and QEFE…TLEE. Phosphoserine occurs at positions 358 and 360. The SMC hinge domain maps to 515–629; the sequence is VYGRLIDLCQ…DNVEDARRIA (115 aa). 2 positions are modified to N6-acetyllysine: K648 and K713. Residues 667-935 adopt a coiled-coil conformation; the sequence is DEKAVDKLKE…RHNLLQACKM (269 aa). The segment at 947–969 is disordered; it reads MDDISQEEGSSQGEESVSGSQRT. Residues 953–967 are compositionally biased toward low complexity; that stretch reads EEGSSQGEESVSGSQ. A phosphoserine mark is found at S957, S962, S966, and S970. The stretch at 988–1068 forms a coiled coil; that stretch reads EDLKDAQAEE…FEQIKKERFD (81 aa). At K1037 the chain carries N6-acetyllysine.

The protein belongs to the SMC family. SMC1 subfamily. In terms of assembly, forms a heterodimer with SMC3 in cohesin complexes. Cohesin complexes are composed of the SMC1 (SMC1A or SMC1B) and SMC3 heterodimer attached via their SMC hinge domain, RAD21 which link them, and one STAG protein (STAG1, STAG2 or STAG3), which interacts with RAD21. In germ cell cohesin complexes, SMC1A is mutually exclusive with SMC1B. Interacts with STAG3. Found in a complex with CDCA5, SMC3 and RAD21, PDS5A/SCC-112 and PDS5B/APRIN. Found in a complex containing POLE and SMC3. Interacts with BRCA1, SYCP2, NDC80, RPGR and BRAT1. The cohesin complex interacts with the cohesin loading complex subunits NIPBL/Scc2 (via HEAT repeats) and MAU2/Scc4. NIPBL directly contacts all members of the complex, RAD21, SMC1A/B, SMC3 and STAG1. In terms of processing, phosphorylated upon ionizing radiation or DNA methylation. Phosphorylation of Ser-957 and Ser-966 activates it and is required for S-phase checkpoint activation. Post-translationally, ubiquitinated by the DCX(DCAF15) complex, leading to its degradation. In terms of tissue distribution, ubiquitous (at protein level).

Its subcellular location is the nucleus. The protein resides in the chromosome. It is found in the centromere. Involved in chromosome cohesion during cell cycle and in DNA repair. Involved in DNA repair via its interaction with BRCA1 and its related phosphorylation by ATM, and works as a downstream effector in the ATM/NBS1 branch of S-phase checkpoint. Central component of cohesin complex. The cohesin complex is required for the cohesion of sister chromatids after DNA replication. The cohesin complex apparently forms a large proteinaceous ring within which sister chromatids can be trapped. At anaphase, the complex is cleaved and dissociates from chromatin, allowing sister chromatids to segregate. The cohesin complex may also play a role in spindle pole assembly during mitosis. Involved in DNA repair via its interaction with BRCA1 and its related phosphorylation by ATM, or via its phosphorylation by ATR. Works as a downstream effector both in the ATM/NBS1 branch and in the ATR/MSH2 branch of S-phase checkpoint. In Mus musculus (Mouse), this protein is Structural maintenance of chromosomes protein 1A (Smc1a).